A 442-amino-acid polypeptide reads, in one-letter code: MREIVHIQGGQCGNQIGAKFWEVISDEHGIDPTGTYHGDSDLQLERINVYYNEATGGRYVPRAVLMDLEPGTMDSVRAGPFGQLFRPDNFVFGQSGAGNNWAKGHYTEGAELIDSVLDVVRKEAEGCDCLQGFQITHSLGGGTGSGMGTLLISKVREEYPDRIMATFSVVPSPKVSDTVVEPYNATLSVHQLVENADEVMCIDNEALYDICFRTLKLTTPTYGDLNHLVSAGISGVTCCLRFPGQLNSDLRKLAVNLIPFPRLHFFMTGFAPLTSRGSQQYRALTVPELTQQMFDAKNMMCASDPRHGRYLTASALFRGRMSTKEVDEQMLNVQNKNSSYFVEWIPNNIKSSVCDIPPKGLKMAVTFLGNSTAIQEMFKRVGEQFTAMFRRKAFLHWYTGEGMDEMEFTEAESNMNDLVSEYQQYQDATAEDEEEMDEEQME.

Residues Gln11, Glu69, Ser138, Gly142, Thr143, Gly144, Asn204, and Asn226 each contribute to the GTP site. Glu69 provides a ligand contact to Mg(2+). Residues 421–442 form a disordered region; sequence EYQQYQDATAEDEEEMDEEQME. Over residues 429-442 the composition is skewed to acidic residues; the sequence is TAEDEEEMDEEQME.

The protein belongs to the tubulin family. As to quaternary structure, dimer of alpha and beta chains. A typical microtubule is a hollow water-filled tube with an outer diameter of 25 nm and an inner diameter of 15 nM. Alpha-beta heterodimers associate head-to-tail to form protofilaments running lengthwise along the microtubule wall with the beta-tubulin subunit facing the microtubule plus end conferring a structural polarity. Microtubules usually have 13 protofilaments but different protofilament numbers can be found in some organisms and specialized cells. The cofactor is Mg(2+).

Its subcellular location is the cytoplasm. It is found in the cytoskeleton. In terms of biological role, tubulin is the major constituent of microtubules, a cylinder consisting of laterally associated linear protofilaments composed of alpha- and beta-tubulin heterodimers. Microtubules grow by the addition of GTP-tubulin dimers to the microtubule end, where a stabilizing cap forms. Below the cap, tubulin dimers are in GDP-bound state, owing to GTPase activity of alpha-tubulin. This Stylonychia lemnae (Ciliate) protein is Tubulin beta chain (TUBB1).